The chain runs to 259 residues: Ribosomal RNA large subunit methyltransferase E (259 aa).

Residues Gly-58, Trp-60, Asp-78, Asp-96, and Asp-120 each coordinate S-adenosyl-L-methionine. Lys-160 acts as the Proton acceptor in catalysis.

It belongs to the class I-like SAM-binding methyltransferase superfamily. RNA methyltransferase RlmE family.

It localises to the cytoplasm. The enzyme catalyses uridine(2552) in 23S rRNA + S-adenosyl-L-methionine = 2'-O-methyluridine(2552) in 23S rRNA + S-adenosyl-L-homocysteine + H(+). Functionally, specifically methylates the uridine in position 2552 of 23S rRNA at the 2'-O position of the ribose in the fully assembled 50S ribosomal subunit. In Methanococcus vannielii (strain ATCC 35089 / DSM 1224 / JCM 13029 / OCM 148 / SB), this protein is Ribosomal RNA large subunit methyltransferase E.